Consider the following 187-residue polypeptide: 2-oxoglutarate synthase subunit KorC (187 aa).

In terms of assembly, heterotetramer of the KorA, KorB, KorC and KorD subunits.

The catalysed reaction is 2 oxidized [2Fe-2S]-[ferredoxin] + 2-oxoglutarate + CoA = succinyl-CoA + 2 reduced [2Fe-2S]-[ferredoxin] + CO2 + H(+). This chain is 2-oxoglutarate synthase subunit KorC (korC), found in Archaeoglobus fulgidus (strain ATCC 49558 / DSM 4304 / JCM 9628 / NBRC 100126 / VC-16).